We begin with the raw amino-acid sequence, 594 residues long: UvrABC system protein C (594 aa).

The 78-residue stretch at Asp14–Val91 folds into the GIY-YIG domain. Positions Ser196–Val231 constitute a UVR domain.

This sequence belongs to the UvrC family. As to quaternary structure, interacts with UvrB in an incision complex.

The protein localises to the cytoplasm. The UvrABC repair system catalyzes the recognition and processing of DNA lesions. UvrC both incises the 5' and 3' sides of the lesion. The N-terminal half is responsible for the 3' incision and the C-terminal half is responsible for the 5' incision. The polypeptide is UvrABC system protein C (Shouchella clausii (strain KSM-K16) (Alkalihalobacillus clausii)).